A 637-amino-acid chain; its full sequence is Probable serine/threonine-protein kinase DDB_G0283065 (637 aa).

2 disordered regions span residues 36–88 (NNNN…KFNR) and 155–234 (NSNN…RFNN). Residues 53–85 (NNSTTKSIDNNNNNTNNSNSNNNNNDNIKNNNK) are compositionally biased toward low complexity. The 394-residue stretch at 236 to 629 (FNDVRVLGKG…NQISTDYDNF (394 aa)) folds into the Protein kinase domain. Residues 242–250 (LGKGGFGIV) and Lys265 contribute to the ATP site. Catalysis depends on Asp479, which acts as the Proton acceptor.

The protein belongs to the protein kinase superfamily. Ser/Thr protein kinase family. GCN2 subfamily.

It carries out the reaction L-seryl-[protein] + ATP = O-phospho-L-seryl-[protein] + ADP + H(+). It catalyses the reaction L-threonyl-[protein] + ATP = O-phospho-L-threonyl-[protein] + ADP + H(+). The protein is Probable serine/threonine-protein kinase DDB_G0283065 of Dictyostelium discoideum (Social amoeba).